Consider the following 314-residue polypeptide: DNA-directed RNA polymerase subunit alpha (314 aa).

The tract at residues 1–228 (MIEIEKPKIE…EHLNIFVGLT (228 aa)) is alpha N-terminal domain (alpha-NTD). The tract at residues 246–314 (EKVLEMTIEE…ELGLGLRKDD (69 aa)) is alpha C-terminal domain (alpha-CTD).

It belongs to the RNA polymerase alpha chain family. Homodimer. The RNAP catalytic core consists of 2 alpha, 1 beta, 1 beta' and 1 omega subunit. When a sigma factor is associated with the core the holoenzyme is formed, which can initiate transcription.

It carries out the reaction RNA(n) + a ribonucleoside 5'-triphosphate = RNA(n+1) + diphosphate. Its function is as follows. DNA-dependent RNA polymerase catalyzes the transcription of DNA into RNA using the four ribonucleoside triphosphates as substrates. This is DNA-directed RNA polymerase subunit alpha from Bacillus velezensis (strain DSM 23117 / BGSC 10A6 / LMG 26770 / FZB42) (Bacillus amyloliquefaciens subsp. plantarum).